The sequence spans 310 residues: Solute carrier family 25 member 47 (310 aa).

Solcar repeat units lie at residues 1–80, 93–208, and 217–304; these read MDFV…CLAH, PTKA…LCEW, and PDVL…VLRL. The next 6 helical transmembrane spans lie at 3–23, 55–75, 98–114, 194–210, 219–239, and 280–298; these read FVAG…LDTV, GLSL…GTYH, ITLS…FLTS, SFAT…EWLT, VLGV…VATP, and LALN…FVAY.

This sequence belongs to the mitochondrial carrier (TC 2.A.29) family. In terms of tissue distribution, specifically expressed in liver (at protein level).

Its subcellular location is the mitochondrion inner membrane. The protein localises to the mitochondrion outer membrane. It carries out the reaction NAD(+)(in) = NAD(+)(out). The catalysed reaction is acetyl-CoA(in) = acetyl-CoA(out). Mitochondrial NAD(+) transporter that acts as a 'metabolic gate' in hepatic lipogenesis. Provides NAD(+) substrate to mitochondrial SIRT3 deacetylase and enables its NAD(+)-dependent activities in mitochondrial energy metabolism. This triggers downstream activation of PRKAA1/AMPK-alpha signaling cascade that negatively regulates sterol regulatory element-binding protein (SREBP) transcriptional activities and ATP-consuming lipogenesis to restore cellular energy balance. May transport other mitochondrial metabolites having an aromatic nucleotide and phosphate groups, such as acetyl-CoA. Does not transport amino acids. The transport mechanism remains to be elucidated. This is Solute carrier family 25 member 47 from Mus musculus (Mouse).